The chain runs to 249 residues: uncharacterized protein (249 aa).

2 stretches are compositionally biased toward polar residues: residues 66–79 (NASLESGQSSTISP) and 92–119 (ASGSVSANKTFQSTESSALHQPKSSSSE). The interval 66–142 (NASLESGQSS…GPTSPRVTPG (77 aa)) is disordered.

Its subcellular location is the plastid. It is found in the chloroplast. This is an uncharacterized protein from Chlorella vulgaris (Green alga).